Reading from the N-terminus, the 286-residue chain is MKNVLSIQSHVIYGHAGNSAAVFPMQRLGINVWPLNTVQLSNHMQYGHWAGSAIDAAKMEQLVDGIAAIGALKRCDAVLSGFLGSPPQARAAVEIVRSVKAMNPNAWYFCDPAMGQTGGIRPEPGVEEFMVQEMPALADGMSPNHTELQKLAGRRIETVAEAVEACRALIRRGPQIILVKHLHDRNSPADRFNMLAVTETEAWIGQRPLYAFPRHPVGVGDLTSAIFVACRLRGDSVRAAFEHTLAAVHAVVKATYDARRYELELVAAQDEIARPSEWFGAWVTDA.

Substrate contacts are provided by residues serine 9 and 44–45 (MQ). ATP is bound by residues aspartate 111, glutamate 147, and lysine 180. Substrate is bound at residue aspartate 221.

This sequence belongs to the pyridoxine kinase family. PdxY subfamily. Homodimer. The cofactor is Mg(2+).

The catalysed reaction is pyridoxal + ATP = pyridoxal 5'-phosphate + ADP + H(+). Its pathway is cofactor metabolism; pyridoxal 5'-phosphate salvage; pyridoxal 5'-phosphate from pyridoxal: step 1/1. In terms of biological role, pyridoxal kinase involved in the salvage pathway of pyridoxal 5'-phosphate (PLP). Catalyzes the phosphorylation of pyridoxal to PLP. In Burkholderia lata (strain ATCC 17760 / DSM 23089 / LMG 22485 / NCIMB 9086 / R18194 / 383), this protein is Pyridoxal kinase PdxY.